The primary structure comprises 391 residues: Succinyl-diaminopimelate desuccinylase (391 aa).

Position 78 (His78) interacts with Zn(2+). Asp80 is an active-site residue. Asp111 is a Zn(2+) binding site. Glu145 functions as the Proton acceptor in the catalytic mechanism. Residues Glu146, Glu174, and His360 each coordinate Zn(2+).

It belongs to the peptidase M20A family. DapE subfamily. As to quaternary structure, homodimer. Zn(2+) is required as a cofactor. Requires Co(2+) as cofactor.

It carries out the reaction N-succinyl-(2S,6S)-2,6-diaminopimelate + H2O = (2S,6S)-2,6-diaminopimelate + succinate. It functions in the pathway amino-acid biosynthesis; L-lysine biosynthesis via DAP pathway; LL-2,6-diaminopimelate from (S)-tetrahydrodipicolinate (succinylase route): step 3/3. In terms of biological role, catalyzes the hydrolysis of N-succinyl-L,L-diaminopimelic acid (SDAP), forming succinate and LL-2,6-diaminopimelate (DAP), an intermediate involved in the bacterial biosynthesis of lysine and meso-diaminopimelic acid, an essential component of bacterial cell walls. The chain is Succinyl-diaminopimelate desuccinylase from Albidiferax ferrireducens (strain ATCC BAA-621 / DSM 15236 / T118) (Rhodoferax ferrireducens).